A 130-amino-acid polypeptide reads, in one-letter code: Small ribosomal subunit protein uS9 (130 aa).

Belongs to the universal ribosomal protein uS9 family.

This is Small ribosomal subunit protein uS9 from Alkalilimnicola ehrlichii (strain ATCC BAA-1101 / DSM 17681 / MLHE-1).